The primary structure comprises 176 residues: MTTIVSVRRNGKVVMGGDGQVSLGNTVMKGNAKKVRRLYHGQVIAGFAGATADAFTLFERFEGQLEKHQGHLVRAAVELAKEWRTDRSLSRLEAMLAVANKDASLIITGNGDVVEPEDGLIAMGSGGAYAQAAARALLNKTDLSAREIAETALNIAGDICVFTNHNLTIEEQDLAD.

The active site involves Thr-2. Na(+)-binding residues include Gly-157, Cys-160, and Thr-163.

Belongs to the peptidase T1B family. HslV subfamily. A double ring-shaped homohexamer of HslV is capped on each side by a ring-shaped HslU homohexamer. The assembly of the HslU/HslV complex is dependent on binding of ATP.

The protein localises to the cytoplasm. It catalyses the reaction ATP-dependent cleavage of peptide bonds with broad specificity.. With respect to regulation, allosterically activated by HslU binding. Protease subunit of a proteasome-like degradation complex believed to be a general protein degrading machinery. The sequence is that of ATP-dependent protease subunit HslV from Pseudomonas putida (strain ATCC 47054 / DSM 6125 / CFBP 8728 / NCIMB 11950 / KT2440).